The primary structure comprises 435 residues: Ribosomal protein uS12 methylthiotransferase RimO (435 aa).

In terms of domain architecture, MTTase N-terminal spans 3-113; it reads HKVGFVSLGC…VVNAVHQHLP (111 aa). Residues C12, C48, C77, C144, C148, and C151 each contribute to the [4Fe-4S] cluster site. One can recognise a Radical SAM core domain in the interval 130 to 367; that stretch reads LTPRHYAYLK…MQVQAEISRN (238 aa). A TRAM domain is found at 370–435; the sequence is KNKIGSTQTV…DDYDLYASLV (66 aa).

Belongs to the methylthiotransferase family. RimO subfamily. [4Fe-4S] cluster is required as a cofactor.

The protein localises to the cytoplasm. It carries out the reaction L-aspartate(89)-[ribosomal protein uS12]-hydrogen + (sulfur carrier)-SH + AH2 + 2 S-adenosyl-L-methionine = 3-methylsulfanyl-L-aspartate(89)-[ribosomal protein uS12]-hydrogen + (sulfur carrier)-H + 5'-deoxyadenosine + L-methionine + A + S-adenosyl-L-homocysteine + 2 H(+). Functionally, catalyzes the methylthiolation of an aspartic acid residue of ribosomal protein uS12. The sequence is that of Ribosomal protein uS12 methylthiotransferase RimO from Legionella pneumophila (strain Lens).